The chain runs to 1578 residues: MATLACRVQFLDDTDPFNSTNFPEPSRPPLFTFREDLALGTQLAGVHRLLRAPHKLDDCTLQLSHNGAYLDLEATLAEQRDELEGFQDDTGRGKKNSIILRTQLSVRVHACIEKLYNSSGRDLRRALFSLKQIFQDDKDLVHEFVIAEGLTCLIKVGAEADQNYQNYILRALGQIMLYVDGMNGVINHSETIQWLYTLVGSKFRLVVKTALKLLLVFVEYSESNAPLLIQAVSAVDTKRGVKPWSNIMEILEEKDGVDTELLVYAMTLVNKTLAGLPDQDTFYDVVDCLEELGIAAVSQRHLNKKGTDLDLLEQFNIYEVALRHEDGDETAEPPPSGHRDRRRASMCSGGTVGEQQGLDRRRSRRHSIQNIKSPLSAPTSPCSPSVPAFKPSQVRDLCEKDEEEEEEEEQPITEPNSEEEREDDAQCQGKDSKASSASGQSSPGKDAAPESSALHTTSSPTSQGRWLSASTAARSPVLGGTSGPEASRPAARLLPPSPGLATRPSTAPKVSPTIDKLPYVPHSPFHLFSYDFEDSPLLTKDKGGDSQTENRYSNFSSNSFQSSRPSPGPSGSPSYASSFSSPQDTRSSPSGLLTSSFRQHQESLAAERERRRQEREERLQRIEREERNKFNREYLDKREEQRQARGERYKYLEQLAAETQEKEPRSQSVSRGRADLSLDLSLPAAPAPPSPSSQSPSADSQEALPVPSSPPTLQCPQVSGKDHEPELEAEAGQGADEASQDIASAHRGAESQEEPVLELEPEERASLSEKERQNEEVNERDNCSASSISSSSSTLEREEKEDKLSEDRATGLWSTSLQDVGVNGQCGDILTSKRFMLDMLYAHNRKSTEDEEKDDGEPGRSAQEVEAVASLATRISTLQANSQAPEESIKRVDIGCLDNRGSVKAFAEKFNSGEVGRGAISPDVESQDKVPDTPPAQLKTESDYIWDQLMANPRELRIQDMDFTDLGEEDDIDVLDVDLGHREAPGPPPPPPPTFLGLPPPPPPPLLDSVPPPPVPGNLLASPVFNTPQGLGWSQVPRGQPAFTKKKKTIRLFWNEVRPFEWPSKNNRRCREFLWSKLEPIKVDTSRLEHLFESKSKELSVTKKTAADGKRQEIIVLDSKRSNAINIGLTVLPPPRTIKIAILNFDEYALNKEGIEKILTMIPTEEEKQKIQEAQLANPEVPLGSAEQFLLTLSSISELSARLHLWAFKMDYETTEKEVAEPLLDLKEGIDQLENNKTLGFILSTLLAIGNFLNGTNAKAFELSYLEKVPEVKDTVHKQSLLHHVCTMVVENFPDSSDLYSEIGAITRSAKVDFDQLQDNLCQMERRCKASWDHLKAIAKHEMKPVLKQRMSEFLKDCAERIIILKIVHRRIINRFHSFLLFMGHPPYAIREVNINKFCRIISEFALEYRTTRERVLQQKQKRANHRERNKTRGKMITDSGKFSGSSPAAPSQPQGLSYAEDAAEHENMKAVLKTSSPALEDATPVLGVRTRSRASRGSTSSWTMGTEESPSVTDDAADEIMDRIVKSATQVPSQRVVPRERKRSRANRKSLRRTLKSGLTPEEARALGLVGTSELQL.

The GBD/FH3 domain occupies 18–405 (NSTNFPEPSR…DLCEKDEEEE (388 aa)). 7 disordered regions span residues 324–518 (HEDG…DKLP), 535–824 (SPLL…GVNG), 915–942 (VGRGAISPDVESQDKVPDTPPAQLKTES), 979–1013 (LGHREAPGPPPPPPPTFLGLPPPPPPPLLDSVPPP), 1418–1462 (QQKQ…YAED), 1490–1514 (RTRSRASRGSTSSWTMGTEESPSVT), and 1528–1565 (SATQVPSQRVVPRERKRSRANRKSLRRTLKSGLTPEEA). Serine 345 and serine 376 each carry phosphoserine. The segment covering 368 to 383 (IQNIKSPLSAPTSPCS) has biased composition (polar residues). Residues 399 to 425 (EKDEEEEEEEEQPITEPNSEEEREDDA) show a composition bias toward acidic residues. Phosphothreonine is present on threonine 413. Residues 434-446 (ASSASGQSSPGKD) are compositionally biased toward low complexity. A compositionally biased stretch (polar residues) spans 453 to 473 (ALHTTSSPTSQGRWLSASTAA). A compositionally biased stretch (low complexity) spans 553–583 (SNFSSNSFQSSRPSPGPSGSPSYASSFSSPQ). The span at 584-598 (DTRSSPSGLLTSSFR) shows a compositional bias: polar residues. Positions 597–645 (FRQHQESLAAERERRRQEREERLQRIEREERNKFNREYLDKREEQRQAR) form a coiled coil. Residues 599–651 (QHQESLAAERERRRQEREERLQRIEREERNKFNREYLDKREEQRQARGERYKY) show a composition bias toward basic and acidic residues. Low complexity-rich tracts occupy residues 675-684 (DLSLDLSLPA) and 692-701 (SSQSPSADSQ). Positions 751 to 761 (SQEEPVLELEP) are enriched in acidic residues. The span at 762-782 (EERASLSEKERQNEEVNERDN) shows a compositional bias: basic and acidic residues. Over residues 784 to 793 (SASSISSSSS) the composition is skewed to low complexity. Over residues 795 to 809 (LEREEKEDKLSEDRA) the composition is skewed to basic and acidic residues. Serine 921 bears the Phosphoserine mark. Threonine 933 is subject to Phosphothreonine. The segment covering 985-1013 (PGPPPPPPPTFLGLPPPPPPPLLDSVPPP) has biased composition (pro residues). Residues 985–1016 (PGPPPPPPPTFLGLPPPPPPPLLDSVPPPPVP) form the FH1 domain. In terms of domain architecture, FH2 spans 1039–1435 (GQPAFTKKKK…HRERNKTRGK (397 aa)). Residues 1420-1434 (KQKRANHRERNKTRG) show a composition bias toward basic residues. A compositionally biased stretch (low complexity) spans 1444–1456 (SGSSPAAPSQPQG). Residues 1515–1547 (DDAADEIMDRIVKSATQVPSQRVVPRERKRSRA) form the DAD domain. Over residues 1541 to 1556 (ERKRSRANRKSLRRTL) the composition is skewed to basic residues.

This sequence belongs to the formin homology family. Interacts with nestin/NES-based interfilament (IF). Interacts with SQSTM1. Expressed in the heart, including left ventricle, kidney, brain and skeletal muscle, including soleus and tibialis anterior (at protein level).

It is found in the cytoplasm. The protein localises to the cytoskeleton. It localises to the myofibril. Its subcellular location is the sarcomere. The protein resides in the z line. Functionally, may play a role in actin filament polymerization in cardiomyocytes. Actin-organizing protein that may cause stress fiber formation together with cell elongation. This is FH1/FH2 domain-containing protein 3 (Fhod3) from Mus musculus (Mouse).